The sequence spans 535 residues: Cytochrome P450 monooxygenase claQ (535 aa).

2 helical membrane-spanning segments follow: residues 7–27 and 225–245; these read IGTW…KLVG and YFAI…NLPT. Cys472 serves as a coordination point for heme.

Belongs to the cytochrome P450 family. Heme is required as a cofactor.

It is found in the membrane. It participates in secondary metabolite biosynthesis; terpenoid biosynthesis. Its function is as follows. Cytochrome P450 monooxygenase; part of the gene cluster that mediates the biosynthesis of clavilactone A, a meroterpenoid that features a unique benzo-fused ten-membered carbocyclic ring unit with an alpha,beta-epoxy-gamma-lactone moiety, forming an intriguing 10/5/3 tricyclic nested skeleton. Cytochrome P450 monooxygenases claO, claP, claQ, claU, and claW are close orthologs, suggesting that a redundant function or pseudogenes are present in the cla cluster. These monoxygenases are not involved in clavilactone A biosynthesis nor its modification. ClaR, ClaS and ClaT are sufficient to produce clavilactone A. The biosynthesis begins with the prenyltransferase claS that transfers geranyl pyrophosphate (GPP) to hydroquinone to produces geranylhydroquinone. The cytochrome P450 monooxygenase claR then catalyzes the diradical coupling reaction between the intramolecular hydroquinone and allyl moieties to form the benzo-fused ten-membered carbocyclic ring unit of wigantol. Finally the cytochrome P450 monooxygenase claT exquisitely and stereoselectively assembles the alpha,beta-epoxy-gamma-lactone moiety, producing clavilactone A via arnebinol A. The sequence is that of Cytochrome P450 monooxygenase claQ from Ampulloclitocybe clavipes (Club foot).